We begin with the raw amino-acid sequence, 302 residues long: Acetaldehyde dehydrogenase 1 (302 aa).

Ser-12–Ile-15 provides a ligand contact to NAD(+). The active-site Acyl-thioester intermediate is Cys-127. Residues Ser-158–Asn-166 and Asn-277 contribute to the NAD(+) site.

This sequence belongs to the acetaldehyde dehydrogenase family.

It carries out the reaction acetaldehyde + NAD(+) + CoA = acetyl-CoA + NADH + H(+). The chain is Acetaldehyde dehydrogenase 1 from Mycobacteroides abscessus (strain ATCC 19977 / DSM 44196 / CCUG 20993 / CIP 104536 / JCM 13569 / NCTC 13031 / TMC 1543 / L948) (Mycobacterium abscessus).